A 316-amino-acid chain; its full sequence is MRILDEAVIPELPNYYRGKVRENYDLPDGNRIIISTDRLSAFDQILTCIPYKGQVLTQTARYWFEQTKDICPNHVVSYPDPNVVIGKRLDILPVEVVVRGYLAGTTGTSILTLYKKGERQMYGMSLPDGMKDNQILPEPVITPTSKAFDGGHDEPLTPSEIVEKKLLTQEQWDTLSRYALALFRHGQEIAAKQGLILVDTKYEFGTDENGTIILADEIHTPDSSRYWMADSYDESFREGKRPASFDKDFVRAWVGERCDPYKDAVPKIPEDLVLQTSQVYIDAYERITGQRFVPDDSGETPLARVRRNLEPFFPGV.

It belongs to the SAICAR synthetase family.

The catalysed reaction is 5-amino-1-(5-phospho-D-ribosyl)imidazole-4-carboxylate + L-aspartate + ATP = (2S)-2-[5-amino-1-(5-phospho-beta-D-ribosyl)imidazole-4-carboxamido]succinate + ADP + phosphate + 2 H(+). Its pathway is purine metabolism; IMP biosynthesis via de novo pathway; 5-amino-1-(5-phospho-D-ribosyl)imidazole-4-carboxamide from 5-amino-1-(5-phospho-D-ribosyl)imidazole-4-carboxylate: step 1/2. This Agrobacterium fabrum (strain C58 / ATCC 33970) (Agrobacterium tumefaciens (strain C58)) protein is Putative phosphoribosylaminoimidazole-succinocarboxamide synthase 2 (purC2).